We begin with the raw amino-acid sequence, 373 residues long: Homoserine O-acetyltransferase (373 aa).

Residues 52–356 (NVVMVLHALT…VYGHDGFLVE (305 aa)) enclose the AB hydrolase-1 domain. S157 acts as the Nucleophile in catalysis. Substrate is bound at residue R227. Residues D320 and H350 contribute to the active site. D351 is a binding site for substrate.

This sequence belongs to the AB hydrolase superfamily. MetX family. Homodimer.

The protein localises to the cytoplasm. The enzyme catalyses L-homoserine + acetyl-CoA = O-acetyl-L-homoserine + CoA. It participates in amino-acid biosynthesis; L-methionine biosynthesis via de novo pathway; O-acetyl-L-homoserine from L-homoserine: step 1/1. Functionally, transfers an acetyl group from acetyl-CoA to L-homoserine, forming acetyl-L-homoserine. The protein is Homoserine O-acetyltransferase of Mycobacterium sp. (strain KMS).